Consider the following 392-residue polypeptide: Hercynylcysteine sulfoxide lyase (392 aa).

Lysine 219 bears the N6-(pyridoxal phosphate)lysine mark.

This sequence belongs to the class-V pyridoxal-phosphate-dependent aminotransferase family. EgtE subfamily. Requires pyridoxal 5'-phosphate as cofactor.

Its subcellular location is the cytoplasm. The protein resides in the nucleus. The catalysed reaction is S-(hercyn-2-yl)-L-cysteine S-oxide + AH2 + H(+) = ergothioneine + pyruvate + A + NH4(+). The protein operates within amino-acid biosynthesis; ergothioneine biosynthesis. Functionally, catalyzes the conversion of hercynylcysteine sulfoxide to ergothioneine by cleaving the cysteine residue at the sulfur atom, the last step in the biosynthesis pathway of ergothioneine. The sequence is that of Hercynylcysteine sulfoxide lyase from Schizosaccharomyces pombe (strain 972 / ATCC 24843) (Fission yeast).